Here is a 235-residue protein sequence, read N- to C-terminus: Ribonuclease 3 (235 aa).

One can recognise an RNase III domain in the interval 7-134; that stretch reads LKDLQNKIEI…LIASIYLDKG (128 aa). Residue Glu47 coordinates Mg(2+). Residue Asp51 is part of the active site. Positions 120 and 123 each coordinate Mg(2+). Glu123 is a catalytic residue. Positions 161-230 constitute a DRBM domain; it reads DYKTKLQEII…AKKAIENMEV (70 aa).

It belongs to the ribonuclease III family. Homodimer. Requires Mg(2+) as cofactor.

Its subcellular location is the cytoplasm. It carries out the reaction Endonucleolytic cleavage to 5'-phosphomonoester.. Digests double-stranded RNA. Involved in the processing of primary rRNA transcript to yield the immediate precursors to the large and small rRNAs (23S and 16S). Processes some mRNAs, and tRNAs when they are encoded in the rRNA operon. Processes pre-crRNA and tracrRNA of type II CRISPR loci if present in the organism. The chain is Ribonuclease 3 from Clostridium tetani (strain Massachusetts / E88).